Here is a 65-residue protein sequence, read N- to C-terminus: MGMRMMFTVFLLVVLATTVVSFMSGRAFRDRNAAAKVSDLIALKARRPECCSHPACNVDHPEICR.

The signal sequence occupies residues 1 to 21; it reads MGMRMMFTVFLLVVLATTVVS. Residues 22–46 constitute a propeptide that is removed on maturation; the sequence is FMSGRAFRDRNAAAKVSDLIALKAR. E49 carries the 4-carboxyglutamate modification. The segment at 52-54 is ser-Xaa-Pro motif, crucial for potent interaction with nAChR; sequence SHP. 2 positions are modified to 4-hydroxyproline: P54 and P61. E62 bears the 4-carboxyglutamate mark.

This sequence belongs to the conotoxin A superfamily. In terms of processing, contains 2 disulfide bonds. Expressed by the venom duct.

The protein resides in the secreted. Alpha-conotoxins act on postsynaptic membranes, they bind to the nicotinic acetylcholine receptors (nAChR) and thus inhibit them. The sequence is that of Alpha-conotoxine-like Am1.5 from Conus amadis (Amadis cone).